A 1089-amino-acid polypeptide reads, in one-letter code: Ankyrin repeat and IBR domain-containing protein 1 (1089 aa).

Gly2 carries the N-myristoyl glycine lipid modification. ANK repeat units lie at residues 45 to 74 and 144 to 173; these read QHNTPLHYAARHGMNKILGTFLGRDGNPNK and KKNTPLHYAAASGMKACVELLVKHGGDLFA. A disordered region spans residues 281 to 321; that stretch reads CQRSGVQMPTPPPSGYNAWDTLPSPRTPRTTRSSVTSPDEI. Residues 303-318 show a composition bias toward low complexity; the sequence is PSPRTPRTTRSSVTSP. The segment at 329–569 is TRIAD supradomain; that stretch reads DTSLCDICMC…GGYYRCTRYE (241 aa). Positions 333, 336, 351, 353, 356, 359, 378, 383, 465, 468, 473, 478, 519, and 522 each coordinate Zn(2+). The RING-type 1 zinc finger occupies 333-383; sequence CDICMCSISVFEDPVDMPCGHDFCRGCWESFLNLKIQEGEAHNIFCPAYDC. An IBR-type zinc finger spans residues 401-478; that stretch reads DKRYLQFDIK…LGEAHEPCDC (78 aa). The segment at 519 to 548 adopts an RING-type 2; atypical zinc-finger fold; that stretch reads CANCKSPIQKNEGCNHMQCAKCKYDFCWIC. Cys532 is a catalytic residue. Zn(2+) is bound by residues Cys537, Cys540, Cys545, Cys548, His555, and Cys565. A coiled-coil region spans residues 575 to 640; sequence EEQSKEMTVE…RALKETEGGC (66 aa). Ser737 carries the phosphoserine modification. Residues 776–821 form a disordered region; it reads RRGDVHSLLSNPPDPDEPSESTLDIPEGGSSSRRPGTSVVSSASMS. The UIM domain maps to 851 to 870; the sequence is EDDPNILLAIQLSLQESGLA. Phosphoserine is present on residues Ser884 and Ser911. Disordered stretches follow at residues 889 to 912, 927 to 964, and 1026 to 1089; these read GTSLPSRLDSVPRNTDSPRAALSS, AENDPFSTDTLSSHPLSEARSDFCPSSSDPDSAGQDPN, and DASV…VHLV. Composition is skewed to polar residues over residues 931–941 and 1070–1082; these read PFSTDTLSSHP and DVSSQTPQTSSDW.

The protein belongs to the RBR family.

It catalyses the reaction [E2 ubiquitin-conjugating enzyme]-S-ubiquitinyl-L-cysteine + [acceptor protein]-L-lysine = [E2 ubiquitin-conjugating enzyme]-L-cysteine + [acceptor protein]-N(6)-ubiquitinyl-L-lysine.. Its function is as follows. Might act as an E3 ubiquitin-protein ligase, or as part of E3 complex, which accepts ubiquitin from specific E2 ubiquitin-conjugating enzymes and then transfers it to substrates. This Homo sapiens (Human) protein is Ankyrin repeat and IBR domain-containing protein 1 (ANKIB1).